Reading from the N-terminus, the 31-residue chain is Zinc metalloproteinase alsophinase (31 aa).

At Q1 the chain carries Pyrrolidone carboxylic acid. One can recognise a Peptidase M12B domain in the interval 9-31; that stretch reads KYIEFYLVVDNGMFXKYSXXFTV. E12 provides a ligand contact to Ca(2+).

Monomer. Requires Zn(2+) as cofactor. In terms of processing, contains 9 disulfide bonds. Expressed by the venom gland.

The protein localises to the secreted. Its activity is regulated as follows. Inhibited by 1,10-phenanthroline. Functionally, snake venom zinc metalloprotease that has potent hemorrhagic activity, fibrinogenolytic activity on the alpha-subunit of human fibrinogen (FGA) in vitro and provokes necrosis in skin, muscle and lung tissues. May contribute to local edema and ecchymosis induced by venom. Hydrolyzes model substrate (beta-chain of insulin) at Ala(14)-Leu(15). The sequence is that of Zinc metalloproteinase alsophinase from Borikenophis portoricensis (Puerto Rican racer).